We begin with the raw amino-acid sequence, 320 residues long: Malate dehydrogenase (320 aa).

NAD(+) contacts are provided by residues 10-15 (GSGMIG) and D34. R83 and R89 together coordinate substrate. Residues N96 and 119–121 (ITN) contribute to the NAD(+) site. The substrate site is built by N121 and R152. H176 acts as the Proton acceptor in catalysis.

Belongs to the LDH/MDH superfamily. MDH type 3 family.

It catalyses the reaction (S)-malate + NAD(+) = oxaloacetate + NADH + H(+). Functionally, catalyzes the reversible oxidation of malate to oxaloacetate. The polypeptide is Malate dehydrogenase (Allorhizobium ampelinum (strain ATCC BAA-846 / DSM 112012 / S4) (Agrobacterium vitis (strain S4))).